The sequence spans 249 residues: Octanoyltransferase (249 aa).

Residues 1–23 are disordered; sequence MVNSPQNPRQDQRQDLDLTSFSA. The 185-residue stretch at 57–241 folds into the BPL/LPL catalytic domain; the sequence is GEAPELVWLL…AFEELFGPTR (185 aa). Substrate contacts are provided by residues 95 to 102, 170 to 172, and 183 to 185; these read RGGQLTYH, AIG, and GIA. C201 serves as the catalytic Acyl-thioester intermediate.

The protein belongs to the LipB family.

It localises to the cytoplasm. The catalysed reaction is octanoyl-[ACP] + L-lysyl-[protein] = N(6)-octanoyl-L-lysyl-[protein] + holo-[ACP] + H(+). The protein operates within protein modification; protein lipoylation via endogenous pathway; protein N(6)-(lipoyl)lysine from octanoyl-[acyl-carrier-protein]: step 1/2. Catalyzes the transfer of endogenously produced octanoic acid from octanoyl-acyl-carrier-protein onto the lipoyl domains of lipoate-dependent enzymes. Lipoyl-ACP can also act as a substrate although octanoyl-ACP is likely to be the physiological substrate. This Bradyrhizobium diazoefficiens (strain JCM 10833 / BCRC 13528 / IAM 13628 / NBRC 14792 / USDA 110) protein is Octanoyltransferase.